The primary structure comprises 852 residues: MEALGPGGDRASPASSTSSLDLWHLSMRADSAYSSFSAASGGPEPRTQSPGTDLLPYLDWDYVRVVWGGPGPAPPDAALCTSPRPRPAVAARSGPQPTEVPGTPGPLNRQATPLLYALAAEAEAAAQAAEPPSPPASRAAYRQRLQGAQRRVLRETSFQRKELRMSLPARLRPTVPARPPATHPRSASLSHPGGEGEPARSRAPAPGTAGRGPLANQQRKWCFSEPGKLDRVGRGGGPARECLGEACSSSGLPGPEPLEFQHPALAKFEDHEVGWLPETQPQGSMNLDSGSLKLGDAFRPASRSRSASGEVLGSWGGSGGTIPIVQAVPQGAETPRPLFQTKLSRFLPQKEAAVMYPAELPQSSPADSEQRVSETCIVPAWLPSLPDEVFLEEAPLVRMRSPPDPHASQGPPASVHASDQPYGTGLGQRTGQVTVPTEYPLHECPGTAGADDCWQGVNGSVGISRPTSHTPTGTANDNIPTIDPTGLTTNPPTAAESDLLKPVPADALGLSGNDTPGPSHNTALARGTGQPGSRPTWPSQCLEELVQELARLDPSLCDPLASQPSPEPPLGLLDGLIPLAEVRAAMRPACGEAGEEAASTFEPGSYQFSFTQLLPAPREETRLENPATHPVLDQPCGQGLPAPNNSIQGKKVELAARLQKMLQDLHTEQERLQGEAQAWARRQAALEAAVRQACAPQELERFSRFMADLERVLGLLLLLGSRLARVRRALARAASDSDPDEQASLLQRLRLLQRQEEDAKELKEHVARRERAVREVLVRALPVEELRVYCALLAGKAAVLAQQRNLDERIRLLQDQLDAIRDDLGHHAPSPSPARPPGTCPPVQPPFPLLLT.

The residue at position 1 (methionine 1) is an N-acetylmethionine. Serine 18 bears the Phosphoserine mark. 3 disordered regions span residues 34-54 (SSFS…GTDL), 81-109 (TSPR…PLNR), and 125-218 (AAQA…ANQQ). The residue at position 103 (threonine 103) is a Phosphothreonine. The segment covering 125-144 (AAQAAEPPSPPASRAAYRQR) has biased composition (low complexity). 2 positions are modified to phosphoserine: serine 133 and serine 137. In terms of domain architecture, ASD1 spans 145-233 (LQGAQRRVLR…SEPGKLDRVG (89 aa)). The span at 152-164 (VLRETSFQRKELR) shows a compositional bias: basic and acidic residues. Residues serine 166, serine 190, and serine 224 each carry the phosphoserine modification. 4 disordered regions span residues 276-320 (LPET…GSGG), 399-431 (MRSP…QRTG), 464-496 (SRPT…TAAE), and 823-852 (DLGH…LLLT). Residues 279-289 (TQPQGSMNLDS) show a composition bias toward polar residues. A compositionally biased stretch (low complexity) spans 301 to 313 (ASRSRSASGEVLG). Residues 465–479 (RPTSHTPTGTANDNI) show a composition bias toward polar residues. Positions 543-825 (EELVQELARL…QLDAIRDDLG (283 aa)) constitute an ASD2 domain. Residues 830–852 (SPSPARPPGTCPPVQPPFPLLLT) show a composition bias toward pro residues.

It belongs to the shroom family. In terms of assembly, interacts with F-actin.

Its subcellular location is the cytoplasm. The protein resides in the cytoskeleton. Functionally, may be involved in the assembly of microtubule arrays during cell elongation. The protein is Protein Shroom1 (SHROOM1) of Homo sapiens (Human).